Consider the following 199-residue polypeptide: GTP cyclohydrolase-2 (199 aa).

49–53 (RIHSE) is a binding site for GTP. The Zn(2+) site is built by Cys-54, Cys-65, and Cys-67. GTP contacts are provided by residues Gln-70, 92–94 (EGR), and Thr-114. Asp-126 (proton acceptor) is an active-site residue. The active-site Nucleophile is Arg-128. GTP is bound by residues Thr-149 and Lys-154. Positions 172–199 (ETGRNPHNSHYLETKRGKLGHLLEGDSE) are disordered.

Belongs to the GTP cyclohydrolase II family. Zn(2+) is required as a cofactor.

The catalysed reaction is GTP + 4 H2O = 2,5-diamino-6-hydroxy-4-(5-phosphoribosylamino)-pyrimidine + formate + 2 phosphate + 3 H(+). The protein operates within cofactor biosynthesis; riboflavin biosynthesis; 5-amino-6-(D-ribitylamino)uracil from GTP: step 1/4. Catalyzes the conversion of GTP to 2,5-diamino-6-ribosylamino-4(3H)-pyrimidinone 5'-phosphate (DARP), formate and pyrophosphate. This chain is GTP cyclohydrolase-2, found in Teredinibacter turnerae (strain ATCC 39867 / T7901).